Reading from the N-terminus, the 120-residue chain is Large ribosomal subunit protein uL18 (120 aa).

This sequence belongs to the universal ribosomal protein uL18 family. As to quaternary structure, part of the 50S ribosomal subunit; part of the 5S rRNA/L5/L18/L25 subcomplex. Contacts the 5S and 23S rRNAs.

This is one of the proteins that bind and probably mediate the attachment of the 5S RNA into the large ribosomal subunit, where it forms part of the central protuberance. In Hyphomonas neptunium (strain ATCC 15444), this protein is Large ribosomal subunit protein uL18.